A 281-amino-acid chain; its full sequence is Putative phosphatase/phosphodiesterase MG246 (281 aa).

Positions 11, 42, 43, and 70 each coordinate Fe cation. Histidine 71 functions as the Proton donor in the catalytic mechanism. Histidine 157, histidine 182, and histidine 184 together coordinate Fe cation.

It belongs to the YmdB-like family. It depends on Fe(3+) as a cofactor.

The protein is Putative phosphatase/phosphodiesterase MG246 of Mycoplasma genitalium (strain ATCC 33530 / DSM 19775 / NCTC 10195 / G37) (Mycoplasmoides genitalium).